The chain runs to 303 residues: GTP cyclohydrolase FolE2 (303 aa).

It belongs to the GTP cyclohydrolase IV family.

It carries out the reaction GTP + H2O = 7,8-dihydroneopterin 3'-triphosphate + formate + H(+). It functions in the pathway cofactor biosynthesis; 7,8-dihydroneopterin triphosphate biosynthesis; 7,8-dihydroneopterin triphosphate from GTP: step 1/1. Converts GTP to 7,8-dihydroneopterin triphosphate. The chain is GTP cyclohydrolase FolE2 from Exiguobacterium sp. (strain ATCC BAA-1283 / AT1b).